Here is a 189-residue protein sequence, read N- to C-terminus: CASP-like protein 1F2 (189 aa).

The Cytoplasmic segment spans residues Met-1 to Gly-27. Residues Phe-28–Ala-48 traverse the membrane as a helical segment. Residues Val-49 to Leu-77 are Extracellular-facing. The chain crosses the membrane as a helical span at residues Val-78–Phe-98. Topologically, residues Asn-99–Asp-113 are cytoplasmic. A helical transmembrane segment spans residues Leu-114–Gly-134. At Arg-135–Lys-156 the chain is on the extracellular side. The chain crosses the membrane as a helical span at residues Ala-157–Met-177. At Ala-178–Ile-189 the chain is on the cytoplasmic side.

This sequence belongs to the Casparian strip membrane proteins (CASP) family. In terms of assembly, homodimer and heterodimers.

It localises to the cell membrane. This chain is CASP-like protein 1F2, found in Vitis vinifera (Grape).